A 247-amino-acid polypeptide reads, in one-letter code: UPF0612 protein P20C8.01c (247 aa).

Coiled coils occupy residues 27–63 (IKRY…MKYE) and 138–225 (DTVQ…DARS).

It belongs to the UPF0612 family.

The protein resides in the cytoplasm. In Schizosaccharomyces pombe (strain 972 / ATCC 24843) (Fission yeast), this protein is UPF0612 protein P20C8.01c.